A 460-amino-acid chain; its full sequence is Chromosomal replication initiator protein DnaA (460 aa).

The segment at 1–91 is domain I, interacts with DnaA modulators; sequence MNLTSPKVST…SLWQSEDKSI (91 aa). The domain II stretch occupies residues 91-122; it reads IRSIDIQVIEERNSNFNVILKNREESNHNLGS. Positions 123-342 are domain III, AAA+ region; it reads PLDPRFTFDN…GALNKVTHTS (220 aa). Residues glycine 169, glycine 171, lysine 172, and threonine 173 each contribute to the ATP site. The interval 343–460 is domain IV, binds dsDNA; the sequence is LIGRSMTVES…EINRLKKMFK (118 aa).

It belongs to the DnaA family. Oligomerizes as a right-handed, spiral filament on DNA at oriC.

It is found in the cytoplasm. In terms of biological role, plays an essential role in the initiation and regulation of chromosomal replication. ATP-DnaA binds to the origin of replication (oriC) to initiate formation of the DNA replication initiation complex once per cell cycle. Binds the DnaA box (a 9 base pair repeat at the origin) and separates the double-stranded (ds)DNA. Forms a right-handed helical filament on oriC DNA; dsDNA binds to the exterior of the filament while single-stranded (ss)DNA is stabiized in the filament's interior. The ATP-DnaA-oriC complex binds and stabilizes one strand of the AT-rich DNA unwinding element (DUE), permitting loading of DNA polymerase. After initiation quickly degrades to an ADP-DnaA complex that is not apt for DNA replication. Binds acidic phospholipids. The sequence is that of Chromosomal replication initiator protein DnaA from Wolbachia pipientis wMel.